The chain runs to 999 residues: Sarcoplasmic/endoplasmic reticulum calcium ATPase 3 (999 aa).

Met1 carries the post-translational modification N-acetylmethionine. Over Met1–Ser48 the chain is Cytoplasmic. Ser17 is subject to Phosphoserine. Thr19 carries the phosphothreonine modification. A Phosphoserine modification is found at Ser25. The chain crosses the membrane as a helical span at residues Leu49–Ala69. Topologically, residues Leu70 to Val89 are lumenal. Residues Glu90–Arg110 form a helical membrane-spanning segment. Topologically, residues Asn111 to Leu253 are cytoplasmic. A helical membrane pass occupies residues Asp254–Val273. At Ile274 to Tyr295 the chain is on the lumenal side. The chain crosses the membrane as a helical span at residues Phe296–Ala313. Ca(2+)-binding residues include Val304, Ala305, Ile307, and Glu309. The Cytoplasmic portion of the chain corresponds to Val314–Met757. Residue Asp351 is the 4-aspartylphosphate intermediate of the active site. Residues Asp351 and Thr353 each contribute to the Mg(2+) site. An ATP-binding site is contributed by Thr353. The interaction with phospholamban 1 stretch occupies residues Ala370 to Gln400. A Phosphothreonine modification is found at Thr415. Glu442, Arg489, Lys515, Arg560, Thr625, Gly626, and Asp627 together coordinate ATP. Residue Ser662 is modified to Phosphoserine. 2 residues coordinate ATP: Arg678 and Lys684. Asp703 lines the Mg(2+) pocket. Asn706 lines the ATP pocket. Residues Lys758–Leu777 form a helical membrane-spanning segment. Ca(2+) is bound by residues Asn768 and Glu771. Over Thr778–Leu787 the chain is Lumenal. A helical transmembrane segment spans residues Ile788–Gly808. An interaction with phospholamban 2 region spans residues Ile788–Gly808. Positions 796, 799, and 800 each coordinate Ca(2+). The Cytoplasmic segment spans residues Phe809–Leu828. The helical transmembrane segment at Ile829–Ala851 threads the bilayer. Topologically, residues Ala852–Thr897 are lumenal. Residues Thr898 to Ser917 form a helical membrane-spanning segment. Residue Glu908 coordinates Ca(2+). Residues Glu918–Asn930 lie on the Cytoplasmic side of the membrane. A helical transmembrane segment spans residues Pro931–Leu949. The Lumenal portion of the chain corresponds to Val950 to Gly964. A helical transmembrane segment spans residues Arg965–Lys985. The Cytoplasmic portion of the chain corresponds to Tyr986–Lys999.

This sequence belongs to the cation transport ATPase (P-type) (TC 3.A.3) family. Type IIA subfamily. Interacts with sarcolipin (SLN). Interacts with phospholamban (PLN). Interacts with myoregulin (MRLN). Interacts with DWORF. Interacts with VMP1. Interacts with TUNAR; the interaction occurs at low levels in low glucose conditions and is increased by high glucose levels. It depends on Mg(2+) as a cofactor. In terms of tissue distribution, found in most tissues. Most abundant in thymus, trachea, salivary gland, spleen, bone marrow, lymph node, peripheral leukocytes, pancreas and colon. Also detected in fetal tissues. Expressed in cell lineages of hematopoietic, epithelial, or embryonic origin and also expressed in several cancer cell lines.

The protein resides in the nucleus membrane. It localises to the endoplasmic reticulum membrane. The protein localises to the sarcoplasmic reticulum membrane. It catalyses the reaction Ca(2+)(in) + ATP + H2O = Ca(2+)(out) + ADP + phosphate + H(+). Its activity is regulated as follows. Inhibited by sarcolipin (SLN), phospholamban (PLN) and myoregulin (MRLN). Enhanced by DWORF; DWORF increases activity by displacing sarcolipin (SLN), phospholamban (PLN) and myoregulin (MRLN). This magnesium-dependent enzyme catalyzes the hydrolysis of ATP coupled with the transport of calcium. Transports calcium ions from the cytosol into the sarcoplasmic/endoplasmic reticulum lumen. Contributes to calcium sequestration involved in muscular excitation/contraction. The sequence is that of Sarcoplasmic/endoplasmic reticulum calcium ATPase 3 from Homo sapiens (Human).